Consider the following 154-residue polypeptide: Transcriptional repressor NrdR (154 aa).

A zinc finger spans residues Cys-3–Cys-34. An ATP-cone domain is found at Leu-46–Asp-136.

It belongs to the NrdR family. Requires Zn(2+) as cofactor.

Its function is as follows. Negatively regulates transcription of bacterial ribonucleotide reductase nrd genes and operons by binding to NrdR-boxes. This chain is Transcriptional repressor NrdR, found in Mycobacterium sp. (strain JLS).